Consider the following 117-residue polypeptide: Large ribosomal subunit protein bL20c (117 aa).

The protein belongs to the bacterial ribosomal protein bL20 family.

It is found in the plastid. It localises to the chloroplast. Its function is as follows. Binds directly to 23S ribosomal RNA and is necessary for the in vitro assembly process of the 50S ribosomal subunit. It is not involved in the protein synthesizing functions of that subunit. The chain is Large ribosomal subunit protein bL20c from Arabis hirsuta (Hairy rock-cress).